The sequence spans 422 residues: 26S proteasome non-ATPase regulatory subunit 11 (422 aa).

In terms of domain architecture, PCI spans aspartate 224 to proline 392.

This sequence belongs to the proteasome subunit S9 family. Component of the 19S proteasome regulatory particle complex. The 26S proteasome consists of a 20S core particle (CP) and two 19S regulatory subunits (RP). The regulatory particle is made of a lid composed of 9 subunits including PSMD11, a base containing 6 ATPases and few additional components.

The protein localises to the nucleus. The protein resides in the cytoplasm. Its subcellular location is the cytosol. Component of the 26S proteasome, a multiprotein complex involved in the ATP-dependent degradation of ubiquitinated proteins. This complex plays a key role in the maintenance of protein homeostasis by removing misfolded or damaged proteins, which could impair cellular functions, and by removing proteins whose functions are no longer required. Therefore, the proteasome participates in numerous cellular processes, including cell cycle progression, apoptosis, or DNA damage repair. In the complex, PSMD11 is required for proteasome assembly. Plays a key role in increased proteasome activity in embryonic stem cells (ESCs): its high expression in ESCs promotes enhanced assembly of the 26S proteasome, followed by higher proteasome activity. In Xenopus tropicalis (Western clawed frog), this protein is 26S proteasome non-ATPase regulatory subunit 11 (psmd11).